A 172-amino-acid chain; its full sequence is R-phycocyanin beta chain (172 aa).

2 residues coordinate (2R,3E)-phycoerythrobilin: Asn35 and Asp39. (2R,3E)-phycocyanobilin contacts are provided by residues Asn72, Cys82, and 84-85 (RD). The residue at position 72 (Asn72) is an N4-methylasparagine. (2R,3E)-phycoerythrobilin is bound by residues 149 to 151 (PAG) and Cys153.

The protein belongs to the phycobiliprotein family. As to quaternary structure, heterododecamer of 6 alpha and 6 beta chains. The basic functional unit of phycobiliproteins is a ring-shaped hexamer formed from two back-to-back trimers contacting via the alpha chain subunits. The trimers are composed of alpha/beta subunit heterodimers arranged around a three-fold axis of symmetry. The phycoerythrins also contain a gamma subunit which is located in the center of the hexamer. Contains one covalently linked phycocyanobilin chromophore and one covalently linked phycoerythrobilin chromophore.

Its subcellular location is the plastid. It is found in the chloroplast thylakoid membrane. Light-harvesting photosynthetic tetrapyrrole chromophore-protein from the phycobiliprotein complex (phycobilisome, PBS). Phycocyanin is the major phycobiliprotein in the PBS rod. The protein is R-phycocyanin beta chain (rpcB) of Polysiphonia urceolata (Red alga).